We begin with the raw amino-acid sequence, 508 residues long: Phenylalanine--tRNA ligase alpha subunit (508 aa).

Ala-2 carries the N-acetylalanine modification. A Phosphothreonine modification is found at Thr-190. A phosphoserine mark is found at Ser-193 and Ser-301. The residue at position 311 (Lys-311) is an N6-acetyllysine. Residues Thr-329, 372-374 (QIE), and Tyr-412 each bind L-phenylalanine. A Mg(2+)-binding site is contributed by Glu-414. An L-phenylalanine-binding site is contributed by Phe-438.

Belongs to the class-II aminoacyl-tRNA synthetase family. Phe-tRNA synthetase alpha subunit type 2 subfamily. As to quaternary structure, heterotetramer; dimer of two heterodimers formed by FARSA and FARSB. It depends on Mg(2+) as a cofactor.

Its subcellular location is the cytoplasm. It carries out the reaction tRNA(Phe) + L-phenylalanine + ATP = L-phenylalanyl-tRNA(Phe) + AMP + diphosphate + H(+). This Pongo abelii (Sumatran orangutan) protein is Phenylalanine--tRNA ligase alpha subunit (FARSA).